We begin with the raw amino-acid sequence, 206 residues long: Ras-related protein Ral-B (206 aa).

A GTP-binding site is contributed by 21-29 (GSGGVGKSA). The short motif at 43–51 (YEPTKADSY) is the Effector region element. GTP-binding positions include 68–72 (DTAGQ), 128–131 (NKSD), and 158–160 (SAK). Over residues 180–189 (KMSENKDKNG) the composition is skewed to basic and acidic residues. The tract at residues 180-206 (KMSENKDKNGKKSGKNKKSFKERCCLL) is disordered. A Cysteine methyl ester modification is found at Cys203. The S-geranylgeranyl cysteine moiety is linked to residue Cys203. A propeptide spans 204 to 206 (CLL) (removed in mature form).

It belongs to the small GTPase superfamily. Ras family. In terms of assembly, interacts with EXOC2/Sec5 and EXOC8/Exo84. Interacts (via effector domain) with RALBP1. In terms of processing, prenylation is essential for membrane localization. Post-translationally, the farnesylated form confers resistance to the proapoptotic and anti-anchorage-dependent growth effects of some geranylgeranyltransferase I inhibitors.

The protein localises to the cell membrane. The protein resides in the midbody. It catalyses the reaction GTP + H2O = GDP + phosphate + H(+). With respect to regulation, alternates between an inactive form bound to GDP and an active form bound to GTP. Activated by a guanine nucleotide-exchange factor (GEF) and inactivated by a GTPase-activating protein (GAP). In terms of biological role, multifunctional GTPase involved in a variety of cellular processes including gene expression, cell migration, cell proliferation, oncogenic transformation and membrane trafficking. Accomplishes its multiple functions by interacting with distinct downstream effectors. Acts as a GTP sensor for GTP-dependent exocytosis of dense core vesicles. Required both to stabilize the assembly of the exocyst complex and to localize functional exocyst complexes to the leading edge of migrating cells. Required for suppression of apoptosis. In late stages of cytokinesis, upon completion of the bridge formation between dividing cells, mediates exocyst recruitment to the midbody to drive abscission. Involved in ligand-dependent receptor mediated endocytosis of the EGF and insulin receptors. The sequence is that of Ras-related protein Ral-B (RALB) from Macaca fascicularis (Crab-eating macaque).